The primary structure comprises 44 residues: Photosystem I reaction center subunit IX (44 aa).

The chain crosses the membrane as a helical span at residues 7–27; it reads YLSTAPVLATLWFSSLAGLLI.

Belongs to the PsaJ family.

The protein localises to the plastid. It localises to the chloroplast thylakoid membrane. In terms of biological role, may help in the organization of the PsaE and PsaF subunits. The chain is Photosystem I reaction center subunit IX from Welwitschia mirabilis (Tree tumbo).